The sequence spans 197 residues: Probable proteasome subunit beta type-4 (197 aa).

The protein belongs to the peptidase T1B family. The 26S proteasome consists of a 20S proteasome core and two 19S regulatory subunits. The 20S proteasome core is composed of 28 subunits that are arranged in four stacked rings, resulting in a barrel-shaped structure. The two end rings are each formed by seven alpha subunits, and the two central rings are each formed by seven beta subunits. The catalytic chamber with the active sites is on the inside of the barrel.

Its subcellular location is the cytoplasm. The protein localises to the nucleus. Its function is as follows. Non-catalytic component of the proteasome which degrades poly-ubiquitinated proteins in the cytoplasm and in the nucleus. It is essential for the regulated turnover of proteins and for the removal of misfolded proteins. The proteasome is a multicatalytic proteinase complex that is characterized by its ability to cleave peptides with Arg, Phe, Tyr, Leu, and Glu adjacent to the leaving group at neutral or slightly basic pH. It has an ATP-dependent proteolytic activity. In Encephalitozoon cuniculi (strain GB-M1) (Microsporidian parasite), this protein is Probable proteasome subunit beta type-4 (PRE1).